The primary structure comprises 234 residues: Purine nucleoside phosphorylase DeoD-type (234 aa).

Residue His-5 coordinates a purine D-ribonucleoside. Phosphate contacts are provided by residues Gly-21, Arg-25, Arg-44, and 88–91 (RVGT). Residues 178 to 180 (EME) and 202 to 203 (SD) contribute to the a purine D-ribonucleoside site. Asp-203 acts as the Proton donor in catalysis.

This sequence belongs to the PNP/UDP phosphorylase family. In terms of assembly, homohexamer; trimer of homodimers.

The enzyme catalyses a purine D-ribonucleoside + phosphate = a purine nucleobase + alpha-D-ribose 1-phosphate. It catalyses the reaction a purine 2'-deoxy-D-ribonucleoside + phosphate = a purine nucleobase + 2-deoxy-alpha-D-ribose 1-phosphate. Catalyzes the reversible phosphorolytic breakdown of the N-glycosidic bond in the beta-(deoxy)ribonucleoside molecules, with the formation of the corresponding free purine bases and pentose-1-phosphate. The sequence is that of Purine nucleoside phosphorylase DeoD-type from Lactococcus lactis subsp. lactis (strain IL1403) (Streptococcus lactis).